Here is a 1526-residue protein sequence, read N- to C-terminus: MNRTSPYYCRRSVLSLLISALIYAPPGMAAFTTNVIGVVNDETVDGNQKVDERGTTNNTHIINHGQQNVHGGVSNGSLIESGGYQDIGSHNNFVGQANNTTINGGRQSIHDGGISTGTTIESGNQDVYKGGISNGTTIKGGASRVEGGSANGILIDGGSQIVKVQGHADGTTINKSGSQDVVQGSLATNTTINGGRQYVEQSTVETTTIKNGGEQRVYESRALDTTIEGGTQSLNSKSTAKNTHIYSGGTQIVDNTSTSDVIEVYSGGVLDVRGGTATNVTQHDGAILKTNTNGTTVSGTNSEGAFSIHNHVADNVLLENGGHLDINAYGSANKTIIKDKGTMSVLTNAKADATRIDNGGVMDVAGNATNTIINGGTQNINNYGIATGTNINSGTQNIKSGGKADTTIISSGSRQVVEKDGTAIGSNISAGGSLIVYTGGIAHGVNQETGSALVANTGAGTDIEGYNKLSHFTITGGEANYVVLENTGELTVVAKTSAKNTTIDTGGKLIVQKEAKTDSTRLNNGGVLEVQDGGEAKHVEQQSGGALIASTTSGTLIEGTNSYGDAFYIRNSEAKNVVLENAGSLTVVTGSRAVDTIINANGKMDVYGKDVGTVLNSAGTQTIYASATSDKANIKGGKQTVYGLATEANIESGEQIVDGGSTEKTHINGGTQTVQNYGKAINTDIVSGLQQIMANGTAEGSIINGGSQVVNEGGLAENSVLNDGGTLDVREKGSATGIQQSSQGALVATTRATRVTGTRADGVAFSIEQGAANNILLANGGVLTVESDTSSDKTQVNMGGREIVKTKATATGTTLTGGEQIVEGVANETTINDGGIQTVSANGEAIKTKINEGGTLTVNDNGKATDIVQNSGAALQTSTANGIEISGTHQYGTFSISGNLATNMLLENGGNLLVLAGTEARDSTVGKGGAMQNLGQDSATKVNSGGQYTLGRSKDEFQALARAEDLQVAGGTAIVYAGTLADASVSGATGSLSLMTPRDNVTPVKLEGAVRITDSATLTLGNGVDTTLADLTAASRGSVWLNSNNSCAGTSNCEYRVNSLLLNDGDVYLSAQTAAPATTNGIYNTLTTNELSGSGNFYLHTNVAGSRGDQLVVNNNATGNFKIFVQDTGVSPQSDDAMTLVKTGGGDASFTLGNTGGFVDLGTYEYVLKSDGNSNWNLTNDVKPNPDPIPNPKPDPKPDPKPDPNPKPDPTPDPTPTPVPEKRITPSTAAVLNMAATLPLVFDAELNSIRERLNIMKASPHNNNVWGATYNTRNNVTTDAGAGFEQTLTGMTVGIDSRNDIPEGITTLGAFMGYSHSHIGFDRGGHGSVGSYSLGGYASWEHESGFYLDGVVKLNRFKSNVAGKMSSGGAANGSYHSNGLGGHIETGMRFTDGNWNLTPYASLTGFTADNPEYHLSNGMKSKSVDTRSIYRELGATLSYNMRLGNGMEVEPWLKAAVRKEFVDDNRVKVNSDGNFVNYLSGRRGIYQAGIKASFSSTLSGHLGVGYSHSAGVESPWNAVAGVNWSF.

Residues 1–29 (MNRTSPYYCRRSVLSLLISALIYAPPGMA) form the signal peptide. Residues 1173–1223 (NSNWNLTNDVKPNPDPIPNPKPDPKPDPKPDPNPKPDPTPDPTPTPVPEKR) form a disordered region. A compositionally biased stretch (basic and acidic residues) spans 1194 to 1206 (PDPKPDPKPDPNP). Positions 1207-1219 (KPDPTPDPTPTPV) are enriched in pro residues. The Autotransporter domain occupies 1258–1526 (ASPHNNNVWG…NAVAGVNWSF (269 aa)).

It is found in the cell outer membrane. Its function is as follows. Upon overexpression shows increased adherence to polyvinyl chloride (PVC) plates, increased mature biofilm formation. The chain is Probable autotransporter YpjA (ypjA) from Escherichia coli (strain K12).